The primary structure comprises 209 residues: CAAX box protein 1 (209 aa).

The interval 182-209 (TAGRPPRDLSPSARPISSPPPETSCVLA) is disordered. Cys206 carries the post-translational modification Cysteine methyl ester. Cys206 is lipidated: S-farnesyl cysteine. The propeptide at 207 to 209 (VLA) is removed in mature form.

As to expression, ubiquitous.

The protein localises to the cell membrane. This is CAAX box protein 1 from Homo sapiens (Human).